The primary structure comprises 359 residues: UDP-3-O-acylglucosamine N-acyltransferase (359 aa).

The active-site Proton acceptor is the histidine 253.

Belongs to the transferase hexapeptide repeat family. LpxD subfamily. In terms of assembly, homotrimer.

It catalyses the reaction a UDP-3-O-[(3R)-3-hydroxyacyl]-alpha-D-glucosamine + a (3R)-hydroxyacyl-[ACP] = a UDP-2-N,3-O-bis[(3R)-3-hydroxyacyl]-alpha-D-glucosamine + holo-[ACP] + H(+). The protein operates within bacterial outer membrane biogenesis; LPS lipid A biosynthesis. Its function is as follows. Catalyzes the N-acylation of UDP-3-O-acylglucosamine using 3-hydroxyacyl-ACP as the acyl donor. Is involved in the biosynthesis of lipid A, a phosphorylated glycolipid that anchors the lipopolysaccharide to the outer membrane of the cell. The polypeptide is UDP-3-O-acylglucosamine N-acyltransferase (Burkholderia cenocepacia (strain ATCC BAA-245 / DSM 16553 / LMG 16656 / NCTC 13227 / J2315 / CF5610) (Burkholderia cepacia (strain J2315))).